We begin with the raw amino-acid sequence, 705 residues long: Rab guanine nucleotide exchange factor sec2 (705 aa).

The stretch at glutamine 144–alanine 285 forms a coiled coil.

It belongs to the SEC2 family.

In terms of biological role, guanine nucleotide exchange factor that plays an important role in regulating the growth and virulence, probably by regulating the autophagy pathway. Affects the sensitivity to cell wall disruptors and the cell wall thickness by regulating the expression levels of the cell wall integrity (CWI) pathway genes, thus coordinating the growth and virulence. Positively regulates the autophagy pathway to enhance the expression of CWI pathway genes in the presence of autophagy inducers. The protein is Rab guanine nucleotide exchange factor sec2 of Aspergillus fumigatus (strain ATCC MYA-4609 / CBS 101355 / FGSC A1100 / Af293) (Neosartorya fumigata).